The sequence spans 236 residues: MTSRLFALIPCAGTGSRSGSALPKQYRTLAGRALLHYTLAAFDACSEFAQTLVVISPDDAHFDARRFAGLRFAVRRCGGASRQASVMNGLIQLAEFGATDADWVLVHDAARPGITPALIRTLIGALKDDPVGGIVALPVADTLKRVPAGGDAIERTESRNGLWQAQTPQMFRIGMLRDAIQRAQLEGRDLTDEASAIEWAGHTPRVVQGSLRNFKVTYPEDFDLAEAILAHPARAS.

It belongs to the IspD/TarI cytidylyltransferase family. IspD subfamily.

The catalysed reaction is 2-C-methyl-D-erythritol 4-phosphate + CTP + H(+) = 4-CDP-2-C-methyl-D-erythritol + diphosphate. Its pathway is isoprenoid biosynthesis; isopentenyl diphosphate biosynthesis via DXP pathway; isopentenyl diphosphate from 1-deoxy-D-xylulose 5-phosphate: step 2/6. Functionally, catalyzes the formation of 4-diphosphocytidyl-2-C-methyl-D-erythritol from CTP and 2-C-methyl-D-erythritol 4-phosphate (MEP). The polypeptide is 2-C-methyl-D-erythritol 4-phosphate cytidylyltransferase (Burkholderia thailandensis (strain ATCC 700388 / DSM 13276 / CCUG 48851 / CIP 106301 / E264)).